The following is a 1598-amino-acid chain: Fatty acid synthase subunit alpha (1598 aa).

The tract at residues 96 to 134 (RTQPHKSSAPQEPVPKAAPKAAPPVPVATAPLPEPGRQV) is disordered. Over residues 104–115 (APQEPVPKAAPK) the composition is skewed to low complexity. The region spanning 143 to 221 (DVPIQSRDVI…QIVSGSTSTT (79 aa)) is the Carrier domain. The residue at position 181 (S181) is an O-(pantetheine 4'-phosphoryl)serine. Residues 543–784 (LKGKTVLLTG…LAALLVNPFA (242 aa)) are ketoreductase (KR) domain. The segment at 818–844 (KQDSTSTPTHQHLPSHHHVDEPEIGKP) is disordered. Polar residues predominate over residues 820 to 829 (DSTSTPTHQH). Residues 992–1524 (HEIVLTRDLA…QKGAQAIIVH (533 aa)) enclose the Ketosynthase family 3 (KS3) domain. The active-site For beta-ketoacyl synthase activity is the C1175. The disordered stretch occupies residues 1280–1301 (ASDKTGRSVPSPGKGTLTNARE). Residues H1409 and H1450 each act as for beta-ketoacyl synthase activity in the active site.

The protein belongs to the thiolase-like superfamily. Fungal fatty acid synthetase subunit alpha family. Fatty acid synthase is composed of alpha and beta subunits.

The enzyme catalyses acetyl-CoA + n malonyl-CoA + 2n NADPH + 4n H(+) = a long-chain-acyl-CoA + n CoA + n CO2 + 2n NADP(+).. It catalyses the reaction a fatty acyl-[ACP] + malonyl-[ACP] + H(+) = a 3-oxoacyl-[ACP] + holo-[ACP] + CO2. It carries out the reaction a (3R)-hydroxyacyl-[ACP] + NADP(+) = a 3-oxoacyl-[ACP] + NADPH + H(+). The protein operates within mycotoxin biosynthesis. Fatty acid synthase subunit alpha; part of the gene cluster that mediates the biosynthesis of gramillins A and B, bicyclic lipopeptides that induce cell death in maize leaves but not in wheat leaves. The nonribosomal peptide synthetase GRA1 incorporates respectively a glutamic adic (Glu), a leucine (Leu), a serine (Ser), a hydroxyglutamine (HOGln), a 2-amino decanoic acid, and 2 cysteins (CysB and CysA). The biosynthesis of 2-amino decanoic acid incorporated in gramillins could be initiated by a fatty acid synthase composed of the alpha and beta subunits FGSG_00036 and FGSG_11656. The cytochrome P450 monooxygenase FGSG_15680 could hydroxylate the fatty acid chain. Subsequent oxidation to the ketone by the oxidoreductase FGSG_00048 and transamination by aminotransferase FGSG_00049 could form 2-amino-decanoic acid. On the other hand, FGSG_15680 could also be responsible for the HO-modified glutamine at the gamma-position. Whether hydroxylation occurs on the fully assembled product or on the Gln residue prior to assembly into the gramillins requires further proof. The thioredoxin FGSG_00043 could also be required for the disulfide-bond formation between CysA and CysB. The specific involvement of the remaining proteins from the cluster is more difficult to discern, but could have broader regulatory (FGSG_00040 and FGSG_11657) or enzymatic functions (FGSG_00044 and FGSG_00045). The final C-domain of GRA1 does not possess the expected sequence of a termination CT domain, often implicated in macrocyclization and release of a cyclopeptidein fungal NRPs; and the thioesterase FGSG_00047 may act in concert with the terminal C-domain of GRA1 to catalyze the formation of the macrocyclic anhydride and release of the products. The polypeptide is Fatty acid synthase subunit alpha (Gibberella zeae (strain ATCC MYA-4620 / CBS 123657 / FGSC 9075 / NRRL 31084 / PH-1) (Wheat head blight fungus)).